The following is a 202-amino-acid chain: Succinate dehydrogenase cytochrome b558 subunit (202 aa).

5 helical membrane-spanning segments follow: residues 12-31, 60-79, 93-113, 135-155, and 178-196; these read LHSL…HLVV, IFII…YIAF, NWLF…VSWH, ILSS…TIFH, and ISTY…VGLK. H28, H70, H113, and H155 together coordinate heme.

Belongs to the cytochrome b558 family. Part of an enzyme complex containing three subunits: a flavoprotein, an iron-sulfur protein and cytochrome b-558.

The protein localises to the cell membrane. It participates in carbohydrate metabolism; tricarboxylic acid cycle. Functionally, di-heme cytochrome of the succinate dehydrogenase complex. The protein is Succinate dehydrogenase cytochrome b558 subunit (sdhC) of Bacillus subtilis (strain 168).